A 329-amino-acid polypeptide reads, in one-letter code: GTP 3',8-cyclase (329 aa).

The region spanning 8–234 (AFARKFYYLR…QLRQRSDGPA (227 aa)) is the Radical SAM core domain. Arg17 provides a ligand contact to GTP. 2 residues coordinate [4Fe-4S] cluster: Cys24 and Cys28. Tyr30 contacts S-adenosyl-L-methionine. Position 31 (Cys31) interacts with [4Fe-4S] cluster. Arg68 provides a ligand contact to GTP. Gly72 contacts S-adenosyl-L-methionine. GTP is bound at residue Thr99. Ser123 is an S-adenosyl-L-methionine binding site. Lys160 is a binding site for GTP. Met194 is a binding site for S-adenosyl-L-methionine. Positions 257 and 260 each coordinate [4Fe-4S] cluster. 262 to 264 (RLR) lines the GTP pocket. Cys274 lines the [4Fe-4S] cluster pocket.

It belongs to the radical SAM superfamily. MoaA family. As to quaternary structure, monomer and homodimer. [4Fe-4S] cluster is required as a cofactor.

It carries out the reaction GTP + AH2 + S-adenosyl-L-methionine = (8S)-3',8-cyclo-7,8-dihydroguanosine 5'-triphosphate + 5'-deoxyadenosine + L-methionine + A + H(+). It participates in cofactor biosynthesis; molybdopterin biosynthesis. Its function is as follows. Catalyzes the cyclization of GTP to (8S)-3',8-cyclo-7,8-dihydroguanosine 5'-triphosphate. In Shigella dysenteriae serotype 1 (strain Sd197), this protein is GTP 3',8-cyclase.